The chain runs to 473 residues: Photosystem II CP43 reaction center protein (473 aa).

Positions 1–14 (MKNLYSLRRFYHVE) are excised as a propeptide. N-acetylthreonine is present on T15. The residue at position 15 (T15) is a Phosphothreonine. 5 consecutive transmembrane segments (helical) span residues 69 to 93 (LFEV…PHLA), 134 to 155 (LVGP…KDKN), 178 to 200 (KAMY…RIIS), 255 to 275 (KPWA…LSYS), and 291 to 312 (WFNT…ASQS). E367 contributes to the [CaMn4O5] cluster binding site. Residues 447-471 (RARAAAAGFEKGIDRDNEPVLSMRP) traverse the membrane as a helical segment.

The protein belongs to the PsbB/PsbC family. PsbC subfamily. PSII is composed of 1 copy each of membrane proteins PsbA, PsbB, PsbC, PsbD, PsbE, PsbF, PsbH, PsbI, PsbJ, PsbK, PsbL, PsbM, PsbT, PsbX, PsbY, PsbZ, Psb30/Ycf12, at least 3 peripheral proteins of the oxygen-evolving complex and a large number of cofactors. It forms dimeric complexes. It depends on Binds multiple chlorophylls and provides some of the ligands for the Ca-4Mn-5O cluster of the oxygen-evolving complex. It may also provide a ligand for a Cl- that is required for oxygen evolution. PSII binds additional chlorophylls, carotenoids and specific lipids. as a cofactor.

Its subcellular location is the plastid. It localises to the chloroplast thylakoid membrane. Its function is as follows. One of the components of the core complex of photosystem II (PSII). It binds chlorophyll and helps catalyze the primary light-induced photochemical processes of PSII. PSII is a light-driven water:plastoquinone oxidoreductase, using light energy to abstract electrons from H(2)O, generating O(2) and a proton gradient subsequently used for ATP formation. The sequence is that of Photosystem II CP43 reaction center protein from Chlorella vulgaris (Green alga).